Here is a 449-residue protein sequence, read N- to C-terminus: Phosphoglucosamine mutase (449 aa).

The active-site Phosphoserine intermediate is the Ser101. Ser101, Asp241, Asp243, and Asp245 together coordinate Mg(2+). The residue at position 101 (Ser101) is a Phosphoserine.

Belongs to the phosphohexose mutase family. Requires Mg(2+) as cofactor. Activated by phosphorylation.

It carries out the reaction alpha-D-glucosamine 1-phosphate = D-glucosamine 6-phosphate. Functionally, catalyzes the conversion of glucosamine-6-phosphate to glucosamine-1-phosphate. The sequence is that of Phosphoglucosamine mutase from Acetivibrio thermocellus (strain ATCC 27405 / DSM 1237 / JCM 9322 / NBRC 103400 / NCIMB 10682 / NRRL B-4536 / VPI 7372) (Clostridium thermocellum).